A 685-amino-acid polypeptide reads, in one-letter code: Protein OCTOPUS (685 aa).

Disordered stretches follow at residues 1 to 34 (MNPA…CNRH), 152 to 202 (RNLP…DYVE), and 280 to 314 (KWRQ…RQLR). A compositionally biased stretch (acidic residues) spans 179–202 (VNDEGEAESDDEELEEEEEEDYVE). Basic residues predominate over residues 280–291 (KWRQNQKMKKRR). Positions 292–314 (NGGDHRPGSARLPVEKPIGRQLR) are enriched in basic and acidic residues. Ser318 is modified (phosphoserine). A disordered region spans residues 419-471 (VEEPAPPPPVVNQTNGVSDPVIIPGGSIQTRDYYTDSSSRRRKSLDRSSSSMR). Positions 549 to 578 (LIYRKSVNKYEEEEEEEEDRYRRLNGGMVE) form a coiled coil. The tract at residues 584–640 (SWPELRNGGGGGGGPRMVRSNSNVSWRSSGGGSARKVNGLDRRNKSSRYSPKNGENG) is disordered. A compositionally biased stretch (low complexity) spans 601–611 (VRSNSNVSWRS).

The protein belongs to the OCTOPUS family. Interacts with VCC. Phosphorylation at Ser-318 amplifies the promotion of protophloem differentiation. Expressed in provascular cells and phloem initials (e.g. protophloem, metaphloem, sieve element precursor cells and sieve element procambium precursor cells).

It localises to the cell membrane. It is found in the cytoplasm. Potentiates primary root protophloem differentiation. Required, together with VCC, for embryo provasculature development and cotyledon vascular complexity and connectivity. Regulates roots architecture. Mediates the recruitment of ASK7/BIN2 to the plasma membrane. The chain is Protein OCTOPUS from Arabidopsis thaliana (Mouse-ear cress).